Here is a 1018-residue protein sequence, read N- to C-terminus: MSKDGNLNTSEFDPLANKEYTEEQKQTLEQEQKEFLSQTTTPELEADDGFIVTSASSAQSTPSTSALSGNISPDSQTSDPITKAVRETIIQPQKDNLIEQILKDLAALTDHDLAEQKRKEIEEEKDKDKTLSTFFGNPANREFIDKALENPELKKKLESIEIAGYKNVHNTFSAASGYPGGFKPVQWENHVSASDLRATVVKNDAGDELCTLNETTVKTKPFTLAKQDGTQVQISSYREIDFPIKLDKADGSMHLSMVALKADGTKPSKDKAVYFTAHYEEGPNGKPQLKEISSPKPLKFAGTGDDAIAYIEHGGEIYTLAVTRGKYKEMMKEVELNQGQSVDLSQAEDIIIGQGQSKEQPLITPQQTTSSSVEPPQYKQQVPPITPTNQPLQPETSQMPQSQQVNPNLLNAATALSGSMQDLLNYVNAGLTKEIDLIKEAATAILNDKKSDIAEKQANIIALAENTVNNKNLTPDAKVAGVNAVLETIKNDQNTPDLEKSKMLEATVAIALNSENLEPKQKQQILEKAVDVGLSLKDDASRAAAIDGITDAVIKSNLSTEDKGTMFIAVGDKVNVSELSNAEKQKLLGSVLKKGVEAQVLSPAQQQLMQQNLDKITAEQTKKDTIKKVNDILFDPLSNTELKTTNIQAIISNVLDGPATAEVKGEIIQEITNTVAGSSLEAHDKAAIIKGISETIATHSDTSLSLPNKALIMASAEKGIAESQANLPDRELMTKGLVDGIYEGKGGPEITKAVSSGIDNSNINDSEKEALKKAKDAASEAALDRETQNLTEGLKGQNIEEHKPHDDIYNKVREVINAVNPVIEALEKSKEPVVSAEERIVQETSSILNNISKLAVEKVNNFRAMLSPNGNLKTLEEKKEESIKKVDELVKAFGTKSSTEEQQSFIKANLIDDKTLSKEIRLQTIDKLLQEQKRAEAIENPSVKTEDVRVVSGKSKLKPISKDKPDIEKAKMVVGRDRVNIKGNIKIMRALMNARDSIQSENLNKSTPIKRESSPPQR.

The span at 1–11 (MSKDGNLNTSE) shows a compositional bias: polar residues. Disordered stretches follow at residues 1–82 (MSKD…DPIT), 355–402 (GQSK…MPQS), and 995–1018 (RDSI…PPQR). Residues 19–34 (EYTEEQKQTLEQEQKE) show a composition bias toward basic and acidic residues. Residues 53–68 (TSASSAQSTPSTSALS) are compositionally biased toward low complexity. Composition is skewed to polar residues over residues 69-80 (GNISPDSQTSDP), 355-380 (GQSK…QYKQ), 387-402 (PTNQ…MPQS), and 996-1007 (DSIQSENLNKST). Residues 1009 to 1018 (IKRESSPPQR) show a composition bias toward basic and acidic residues.

It is found in the cytoplasm. This Rickettsia japonica (strain ATCC VR-1363 / YH) protein is Antigenic heat-stable 120 kDa protein (sca4).